Consider the following 321-residue polypeptide: Aspartate carbamoyltransferase catalytic subunit (321 aa).

Residues R64 and T65 each coordinate carbamoyl phosphate. K92 contacts L-aspartate. Residues R114, H144, and Q147 each coordinate carbamoyl phosphate. L-aspartate contacts are provided by R177 and R232. Carbamoyl phosphate contacts are provided by G273 and P274.

The protein belongs to the aspartate/ornithine carbamoyltransferase superfamily. ATCase family. In terms of assembly, heterododecamer (2C3:3R2) of six catalytic PyrB chains organized as two trimers (C3), and six regulatory PyrI chains organized as three dimers (R2).

It carries out the reaction carbamoyl phosphate + L-aspartate = N-carbamoyl-L-aspartate + phosphate + H(+). It participates in pyrimidine metabolism; UMP biosynthesis via de novo pathway; (S)-dihydroorotate from bicarbonate: step 2/3. Its function is as follows. Catalyzes the condensation of carbamoyl phosphate and aspartate to form carbamoyl aspartate and inorganic phosphate, the committed step in the de novo pyrimidine nucleotide biosynthesis pathway. This chain is Aspartate carbamoyltransferase catalytic subunit, found in Alkalilimnicola ehrlichii (strain ATCC BAA-1101 / DSM 17681 / MLHE-1).